The sequence spans 95 residues: Aspartyl/glutamyl-tRNA(Asn/Gln) amidotransferase subunit C (95 aa).

The protein belongs to the GatC family. As to quaternary structure, heterotrimer of A, B and C subunits.

The catalysed reaction is L-glutamyl-tRNA(Gln) + L-glutamine + ATP + H2O = L-glutaminyl-tRNA(Gln) + L-glutamate + ADP + phosphate + H(+). It carries out the reaction L-aspartyl-tRNA(Asn) + L-glutamine + ATP + H2O = L-asparaginyl-tRNA(Asn) + L-glutamate + ADP + phosphate + 2 H(+). Allows the formation of correctly charged Asn-tRNA(Asn) or Gln-tRNA(Gln) through the transamidation of misacylated Asp-tRNA(Asn) or Glu-tRNA(Gln) in organisms which lack either or both of asparaginyl-tRNA or glutaminyl-tRNA synthetases. The reaction takes place in the presence of glutamine and ATP through an activated phospho-Asp-tRNA(Asn) or phospho-Glu-tRNA(Gln). The polypeptide is Aspartyl/glutamyl-tRNA(Asn/Gln) amidotransferase subunit C (Rhodopseudomonas palustris (strain BisB5)).